Consider the following 758-residue polypeptide: Vesicular-fusion protein SEC18 (758 aa).

Ser-226 carries the post-translational modification Phosphoserine. ATP is bound by residues 281 to 288 (GPPGTGKT) and 564 to 571 (GPAGSGKT).

This sequence belongs to the AAA ATPase family. In terms of assembly, homohexamer. Binds to SEC17.

The protein localises to the cytoplasm. In terms of biological role, required for vesicle-mediated transport. Catalyzes the fusion of transport vesicles within the Golgi cisternae. Is also required for transport from the endoplasmic reticulum to the Golgi stack. Seems to function as a fusion protein required for the delivery of cargo proteins to all compartments of the Golgi stack independent of vesicle origin. This Saccharomyces cerevisiae (strain ATCC 204508 / S288c) (Baker's yeast) protein is Vesicular-fusion protein SEC18 (SEC18).